We begin with the raw amino-acid sequence, 199 residues long: NAD(P)H dehydrogenase (quinone) (199 aa).

The region spanning 4 to 190 is the Flavodoxin-like domain; that stretch reads VLVLYYSTYG…AGARHQGELV (187 aa). FMN-binding positions include 10–15 and 78–80; these read STYGHL and TRF. Tyr-12 is a binding site for NAD(+). A substrate-binding site is contributed by Trp-98. Residues 113-119 and His-134 each bind FMN; that span reads STATQHG.

It belongs to the WrbA family. The cofactor is FMN.

It carries out the reaction a quinone + NADH + H(+) = a quinol + NAD(+). The enzyme catalyses a quinone + NADPH + H(+) = a quinol + NADP(+). The chain is NAD(P)H dehydrogenase (quinone) from Azorhizobium caulinodans (strain ATCC 43989 / DSM 5975 / JCM 20966 / LMG 6465 / NBRC 14845 / NCIMB 13405 / ORS 571).